A 109-amino-acid polypeptide reads, in one-letter code: uncharacterized protein (109 aa).

The chain crosses the membrane as a helical span at residues 12–32; the sequence is PNILIKGVYIFVLYGMCICIV.

The protein localises to the membrane. This is an uncharacterized protein from Saccharomyces cerevisiae (strain ATCC 204508 / S288c) (Baker's yeast).